Here is a 217-residue protein sequence, read N- to C-terminus: Small ribosomal subunit protein uS3 (217 aa).

One can recognise a KH type-2 domain in the interval 38-106; the sequence is IRKFIDNELK…KVHINVIEIK (69 aa).

The protein belongs to the universal ribosomal protein uS3 family. As to quaternary structure, part of the 30S ribosomal subunit. Forms a tight complex with proteins S10 and S14.

Binds the lower part of the 30S subunit head. Binds mRNA in the 70S ribosome, positioning it for translation. In Staphylococcus haemolyticus (strain JCSC1435), this protein is Small ribosomal subunit protein uS3.